A 1039-amino-acid polypeptide reads, in one-letter code: Error-prone DNA polymerase (1039 aa).

It belongs to the DNA polymerase type-C family. DnaE2 subfamily.

Its subcellular location is the cytoplasm. The enzyme catalyses DNA(n) + a 2'-deoxyribonucleoside 5'-triphosphate = DNA(n+1) + diphosphate. DNA polymerase involved in damage-induced mutagenesis and translesion synthesis (TLS). It is not the major replicative DNA polymerase. This is Error-prone DNA polymerase from Corynebacterium diphtheriae (strain ATCC 700971 / NCTC 13129 / Biotype gravis).